The following is a 309-amino-acid chain: Elongation factor Ts (309 aa).

Residues Thr-82–Val-85 form an involved in Mg(2+) ion dislocation from EF-Tu region.

The protein belongs to the EF-Ts family.

It localises to the cytoplasm. In terms of biological role, associates with the EF-Tu.GDP complex and induces the exchange of GDP to GTP. It remains bound to the aminoacyl-tRNA.EF-Tu.GTP complex up to the GTP hydrolysis stage on the ribosome. This chain is Elongation factor Ts, found in Rickettsia rickettsii (strain Iowa).